Reading from the N-terminus, the 214-residue chain is Cytochrome b (214 aa).

Transmembrane regions (helical) follow at residues 31–51, 75–96, 111–131, and 176–196; these read FGSM…FLAI, WIMQ…YIHI, WLSG…GYVL, and FFAL…IHIL. Residues histidine 81 and histidine 95 each contribute to the heme b site. Residues histidine 180 and histidine 194 each contribute to the heme b site. Histidine 199 serves as a coordination point for a ubiquinone.

It belongs to the cytochrome b family. In terms of assembly, the cytochrome bc1 complex contains 3 respiratory subunits (MT-CYB, CYC1 and UQCRFS1), 2 core proteins (UQCRC1 and UQCRC2) and probably 6 low-molecular weight proteins. Heme b serves as cofactor.

It is found in the mitochondrion inner membrane. In terms of biological role, component of the ubiquinol-cytochrome c reductase complex (complex III or cytochrome b-c1 complex) that is part of the mitochondrial respiratory chain. The b-c1 complex mediates electron transfer from ubiquinol to cytochrome c. Contributes to the generation of a proton gradient across the mitochondrial membrane that is then used for ATP synthesis. This is Cytochrome b (MT-CYB) from Bothrops atrox (Barba amarilla).